Consider the following 288-residue polypeptide: POU domain class 2-associating factor 2 (288 aa).

The region spanning 10 to 32 (KRVYQGVRVKHTVKDLLAEKRSG) is the OCA domain. Disordered regions lie at residues 24–52 (DLLAEKRSGQTSNSRLNGSVSSSQSPFVQ) and 247–274 (PPKVGPLSPDEEADTGSLHDPSPWVKED). Over residues 35 to 48 (SNSRLNGSVSSSQS) the composition is skewed to low complexity.

The protein belongs to the POU2AF family. As to quaternary structure, interacts with POU2F3 (via the POU domain) in a DNA-dependent manner; this interaction recruits POU2AF2 to chromatin and increases POU2F3 transactivation activity. In terms of tissue distribution, expressed in tuft cells of colon mucosa, as well as in small intestine and thymus.

It localises to the cytoplasm. It is found in the cytosol. The protein localises to the nucleus. Transcriptional coactivator of POU2F3. This complex drives the development of tuft cells, a rare chemosensory cells that coordinate immune and neural functions within mucosal epithelial tissues. The protein is POU domain class 2-associating factor 2 of Homo sapiens (Human).